The chain runs to 174 residues: Glyoxylase I 4 (174 aa).

The 123-residue stretch at 13–135 (SLNHVSVLCR…DGFMIEICNC (123 aa)) folds into the VOC domain. Catalysis depends on E131, which acts as the Proton donor/acceptor.

Belongs to the glyoxalase I family. Mostly expressed in roots, and, to a lower extent, in leaves, flowers, seeds and siliques.

It is found in the cell membrane. Its subcellular location is the cytoplasm. In terms of biological role, involved in the detoxification and scavenging of methylglyoxal (MG), a cytotoxic aldehyde produced in response to primary metabolism alteration observed during biotic and abiotic stresses. Modulates cross-talk between salicylic acid (SA) and jasmonic acid (JA) signaling pathways during defense responses to pathogens such as Botrytis cinerea. The polypeptide is Glyoxylase I 4 (Arabidopsis thaliana (Mouse-ear cress)).